Here is a 663-residue protein sequence, read N- to C-terminus: 72 kDa type IV collagenase (663 aa).

An N-terminal signal peptide occupies residues 1-26; it reads MKTHSVFGFFFKVLLIQVYLFNKTLA. Residues 27–106 constitute a propeptide, activation peptide; it reads APSPIIKFPG…PRCGNPDVAN (80 aa). Positions 97–104 match the Cysteine switch motif; that stretch reads PRCGNPDV. Residue Cys-99 coordinates Zn(2+). Residues 107 to 218 form a collagenase-like 1 region; that stretch reads YNFFPRKPKW…LWTLGEGQVV (112 aa). 2 residues coordinate Ca(2+): Asp-131 and Asp-165. His-175 and Asp-177 together coordinate Zn(2+). The Ca(2+) site is built by Asp-182 and Gly-183. Position 190 (His-190) interacts with Zn(2+). Ca(2+)-binding residues include Gly-197, Gly-199, and Asp-201. His-203 contacts Zn(2+). Residues Asp-205, Asp-206, and Glu-208 each coordinate Ca(2+). The interval 219–393 is collagen-binding; the sequence is RVKYGNADGE…WGFCPDQGYS (175 aa). Fibronectin type-II domains follow at residues 225–273, 283–331, and 341–389; these read ADGE…FCPH, GDGQ…FCPE, and SEGA…FCPD. 6 disulfides stabilise this stretch: Cys-230–Cys-256, Cys-244–Cys-271, Cys-288–Cys-314, Cys-302–Cys-329, Cys-346–Cys-372, and Cys-360–Cys-387. The collagenase-like 2 stretch occupies residues 394 to 468; sequence LFLVAAHEFG…GPRPTLGPVT (75 aa). His-400 contacts Zn(2+). Glu-401 is a catalytic residue. 2 residues coordinate Zn(2+): His-404 and His-410. Residues 445 to 464 form a disordered region; the sequence is SPDVEPGPGPGPGPGPRPTL. The segment covering 449 to 463 has biased composition (pro residues); it reads EPGPGPGPGPGPRPT. Cys-472 and Cys-663 are joined by a disulfide. Hemopexin repeat units follow at residues 475–519, 520–566, 568–616, and 617–663; these read DIVF…WPDL, PEKI…GLPP, VQRI…WNGV, and PDNL…WLGC. 4 residues coordinate Ca(2+): Asp-479, Asp-524, Asp-572, and Asp-621.

The protein belongs to the peptidase M10A family. As to quaternary structure, ligand for integrin alpha-V/beta-3. Ca(2+) is required as a cofactor. It depends on Zn(2+) as a cofactor. Post-translationally, the propeptide is processed by MMP14 (MT-MMP1) and MMP16 (MT-MMP3). Produced by normal skin fibroblasts.

The protein localises to the secreted. The protein resides in the extracellular space. It localises to the extracellular matrix. The enzyme catalyses Cleavage of gelatin type I and collagen types IV, V, VII, X. Cleaves the collagen-like sequence Pro-Gln-Gly-|-Ile-Ala-Gly-Gln.. The polypeptide is 72 kDa type IV collagenase (MMP2) (Gallus gallus (Chicken)).